Reading from the N-terminus, the 430-residue chain is Enolase (430 aa).

Residue glutamine 167 coordinates (2R)-2-phosphoglycerate. Glutamate 209 (proton donor) is an active-site residue. Aspartate 246, glutamate 287, and aspartate 314 together coordinate Mg(2+). (2R)-2-phosphoglycerate-binding residues include lysine 339, arginine 368, serine 369, and lysine 390. Lysine 339 functions as the Proton acceptor in the catalytic mechanism.

The protein belongs to the enolase family. Mg(2+) is required as a cofactor.

It is found in the cytoplasm. Its subcellular location is the secreted. The protein localises to the cell surface. The enzyme catalyses (2R)-2-phosphoglycerate = phosphoenolpyruvate + H2O. Its pathway is carbohydrate degradation; glycolysis; pyruvate from D-glyceraldehyde 3-phosphate: step 4/5. In terms of biological role, catalyzes the reversible conversion of 2-phosphoglycerate (2-PG) into phosphoenolpyruvate (PEP). It is essential for the degradation of carbohydrates via glycolysis. This is Enolase from Prochlorococcus marinus (strain MIT 9215).